Consider the following 517-residue polypeptide: UDP-N-acetylmuramoyl-L-alanyl-D-glutamate--2,6-diaminopimelate ligase (517 aa).

Leucine 34 and serine 36 together coordinate UDP-N-acetyl-alpha-D-muramoyl-L-alanyl-D-glutamate. 122–128 (GTSGKTT) lines the ATP pocket. UDP-N-acetyl-alpha-D-muramoyl-L-alanyl-D-glutamate-binding positions include 164–165 (TT), serine 191, and arginine 199. Lysine 231 is subject to N6-carboxylysine. Residues arginine 394, 418–421 (DNPR), glycine 476, and glutamate 480 contribute to the meso-2,6-diaminopimelate site. Positions 418 to 421 (DNPR) match the Meso-diaminopimelate recognition motif motif.

The protein belongs to the MurCDEF family. MurE subfamily. It depends on Mg(2+) as a cofactor. Post-translationally, carboxylation is probably crucial for Mg(2+) binding and, consequently, for the gamma-phosphate positioning of ATP.

The protein localises to the cytoplasm. It carries out the reaction UDP-N-acetyl-alpha-D-muramoyl-L-alanyl-D-glutamate + meso-2,6-diaminopimelate + ATP = UDP-N-acetyl-alpha-D-muramoyl-L-alanyl-gamma-D-glutamyl-meso-2,6-diaminopimelate + ADP + phosphate + H(+). It functions in the pathway cell wall biogenesis; peptidoglycan biosynthesis. Its function is as follows. Catalyzes the addition of meso-diaminopimelic acid to the nucleotide precursor UDP-N-acetylmuramoyl-L-alanyl-D-glutamate (UMAG) in the biosynthesis of bacterial cell-wall peptidoglycan. This is UDP-N-acetylmuramoyl-L-alanyl-D-glutamate--2,6-diaminopimelate ligase from Corynebacterium glutamicum (strain ATCC 13032 / DSM 20300 / JCM 1318 / BCRC 11384 / CCUG 27702 / LMG 3730 / NBRC 12168 / NCIMB 10025 / NRRL B-2784 / 534).